Reading from the N-terminus, the 352-residue chain is Coproporphyrin III ferrochelatase (352 aa).

Positions 52 and 121 each coordinate Fe-coproporphyrin III. 2 residues coordinate Fe(2+): histidine 181 and glutamate 269.

It belongs to the ferrochelatase family.

It localises to the cytoplasm. The catalysed reaction is Fe-coproporphyrin III + 2 H(+) = coproporphyrin III + Fe(2+). It functions in the pathway porphyrin-containing compound metabolism; protoheme biosynthesis. In terms of biological role, involved in coproporphyrin-dependent heme b biosynthesis. Catalyzes the insertion of ferrous iron into coproporphyrin III to form Fe-coproporphyrin III. The chain is Coproporphyrin III ferrochelatase from Nocardia farcinica (strain IFM 10152).